Reading from the N-terminus, the 103-residue chain is Large ribosomal subunit protein uL24 (103 aa).

The protein belongs to the universal ribosomal protein uL24 family. As to quaternary structure, part of the 50S ribosomal subunit.

In terms of biological role, one of two assembly initiator proteins, it binds directly to the 5'-end of the 23S rRNA, where it nucleates assembly of the 50S subunit. Functionally, one of the proteins that surrounds the polypeptide exit tunnel on the outside of the subunit. This chain is Large ribosomal subunit protein uL24, found in Latilactobacillus sakei subsp. sakei (strain 23K) (Lactobacillus sakei subsp. sakei).